Here is a 233-residue protein sequence, read N- to C-terminus: Orotidine 5'-phosphate decarboxylase (233 aa).

Substrate-binding positions include aspartate 11, lysine 34, 61 to 70, threonine 117, arginine 179, glutamine 189, glycine 209, and arginine 210; that span reads DLKLHDIPNT. Lysine 63 serves as the catalytic Proton donor.

Belongs to the OMP decarboxylase family. Type 1 subfamily. Homodimer.

It catalyses the reaction orotidine 5'-phosphate + H(+) = UMP + CO2. The protein operates within pyrimidine metabolism; UMP biosynthesis via de novo pathway; UMP from orotate: step 2/2. Catalyzes the decarboxylation of orotidine 5'-monophosphate (OMP) to uridine 5'-monophosphate (UMP). This chain is Orotidine 5'-phosphate decarboxylase, found in Streptococcus agalactiae serotype Ia (strain ATCC 27591 / A909 / CDC SS700).